The sequence spans 335 residues: MHEPAFWHRPSSLLSRLLMPVGALYGAVAARRLMRTGMRAGVPVICVGNYHVGGAGKTPTVIALAGILRSLGETPVVLSRGYGGRLHGPVHVDPHRHTAADVGDEPLMMAWTIPVIVSRQRAAGIAPARALGASVILMDDGFQNPALAKDISLIVIDRARGLGNGQVFPAGPLRAPLPPQLARTDALVIVGFGPAADDVAASIGARGGLVLPARLIPDDASVVALRGRRVYAFAGIGDPQRFFRSLRACGIDVAAERAFPDHHPFSQRDVADLQTAAERDGLTLVTTEKDLARLRNSEDLAAFAQAVVAFAVTLAFDDEAVLRSFLTDRIGRARR.

51–58 contacts ATP; it reads HVGGAGKT.

This sequence belongs to the LpxK family.

The catalysed reaction is a lipid A disaccharide + ATP = a lipid IVA + ADP + H(+). It participates in glycolipid biosynthesis; lipid IV(A) biosynthesis; lipid IV(A) from (3R)-3-hydroxytetradecanoyl-[acyl-carrier-protein] and UDP-N-acetyl-alpha-D-glucosamine: step 6/6. In terms of biological role, transfers the gamma-phosphate of ATP to the 4'-position of a tetraacyldisaccharide 1-phosphate intermediate (termed DS-1-P) to form tetraacyldisaccharide 1,4'-bis-phosphate (lipid IVA). The polypeptide is Tetraacyldisaccharide 4'-kinase (Nitrobacter hamburgensis (strain DSM 10229 / NCIMB 13809 / X14)).